The primary structure comprises 293 residues: Probable endonuclease 4 (293 aa).

The Zn(2+) site is built by histidine 78, histidine 118, glutamate 154, aspartate 188, histidine 191, histidine 225, aspartate 238, histidine 240, and glutamate 270.

It belongs to the AP endonuclease 2 family. It depends on Zn(2+) as a cofactor.

The enzyme catalyses Endonucleolytic cleavage to 5'-phosphooligonucleotide end-products.. Endonuclease IV plays a role in DNA repair. It cleaves phosphodiester bonds at apurinic or apyrimidinic (AP) sites, generating a 3'-hydroxyl group and a 5'-terminal sugar phosphate. This is Probable endonuclease 4 from Vibrio vulnificus (strain YJ016).